Here is a 284-residue protein sequence, read N- to C-terminus: Diaminopimelate epimerase (284 aa).

Positions 20, 53, and 73 each coordinate substrate. Catalysis depends on cysteine 82, which acts as the Proton donor. Substrate is bound by residues 83–84, asparagine 167, asparagine 200, and 218–219; these read GN and ER. The Proton acceptor role is filled by cysteine 227. Substrate is bound at residue 228–229; sequence GS.

It belongs to the diaminopimelate epimerase family. Homodimer.

The protein resides in the cytoplasm. The enzyme catalyses (2S,6S)-2,6-diaminopimelate = meso-2,6-diaminopimelate. It functions in the pathway amino-acid biosynthesis; L-lysine biosynthesis via DAP pathway; DL-2,6-diaminopimelate from LL-2,6-diaminopimelate: step 1/1. In terms of biological role, catalyzes the stereoinversion of LL-2,6-diaminopimelate (L,L-DAP) to meso-diaminopimelate (meso-DAP), a precursor of L-lysine and an essential component of the bacterial peptidoglycan. The protein is Diaminopimelate epimerase of Xanthomonas axonopodis pv. citri (strain 306).